The following is a 313-amino-acid chain: Formimidoylglutamase (313 aa).

6 residues coordinate Mn(2+): His130, Asp155, His157, Asp159, Asp241, and Asp243.

The protein belongs to the arginase family. The cofactor is Mn(2+).

It carries out the reaction N-formimidoyl-L-glutamate + H2O = formamide + L-glutamate. Its pathway is amino-acid degradation; L-histidine degradation into L-glutamate; L-glutamate from N-formimidoyl-L-glutamate (hydrolase route): step 1/1. Catalyzes the conversion of N-formimidoyl-L-glutamate to L-glutamate and formamide. This chain is Formimidoylglutamase, found in Salmonella newport (strain SL254).